A 419-amino-acid chain; its full sequence is Phosphatidylcholine:ceramide cholinephosphotransferase 1 (419 aa).

One can recognise an SAM domain in the interval 13–76 (WSPKKVADWL…LDMIETLKME (64 aa)). Residue S14 is modified to Phosphoserine. A run of 5 helical transmembrane segments spans residues 142 to 162 (LLAFLYALSCFVLTTVMISVV), 190 to 210 (FSICEINGMILVGLWLFQWLL), 221 to 241 (FFCIVGTLYLYRCITMYVTTL), 282 to 302 (MCGDYLYSGHTVMLTLTYLFI), and 310 to 330 (LWWYHWICWLLSVVGIFCILL). The active site involves H291. Residues 331–419 (AHDHYTVDVV…VKYSRLVNDT (89 aa)) lie on the Cytoplasmic side of the membrane. Residues H334 and D338 contribute to the active site.

It belongs to the sphingomyelin synthase family.

It is found in the golgi apparatus membrane. The catalysed reaction is an N-acylsphing-4-enine + a 1,2-diacyl-sn-glycero-3-phosphocholine = a sphingomyelin + a 1,2-diacyl-sn-glycerol. The enzyme catalyses 1-(9Z-octadecenoyl)-2-acyl-sn-3-glycerol + a sphingomyelin = a 1-(9Z-octadecenoyl)-2-acyl-sn-glycero-3-phosphocholine + an N-acylsphing-4-enine. It carries out the reaction N-hexadecanoylsphinganine + a 1,2-diacyl-sn-glycero-3-phosphocholine = N-hexadecanoyl-sphinganine-1-phosphocholine + a 1,2-diacyl-sn-glycerol. It catalyses the reaction N-hexadecanoyl-(4R)-hydroxysphinganine + a 1,2-diacyl-sn-glycero-3-phosphocholine = N-hexadecanoyl-(4R)-hydroxysphinganine-phosphocholine + a 1,2-diacyl-sn-glycerol. The catalysed reaction is an N-acylsphing-4-enine + a 1,2-diacyl-sn-glycero-3-phosphoethanolamine = an N-acylsphing-4-enine 1-phosphoethanolamine + a 1,2-diacyl-sn-glycerol. It functions in the pathway sphingolipid metabolism. In terms of biological role, major sphingomyelin synthase at the Golgi apparatus. Catalyzes the reversible transfer of phosphocholine moiety in sphingomyelin biosynthesis: in the forward reaction transfers phosphocholine head group of phosphatidylcholine (PC) on to ceramide (CER) to form ceramide phosphocholine (sphingomyelin, SM) and diacylglycerol (DAG) as by-product, and in the reverse reaction transfers phosphocholine from SM to DAG to form PC and CER. The direction of the reaction depends on the levels of CER and DAG in Golgi membranes. Converts the newly synthesized CER, that is transported from the endoplasmic reticulum to the trans-Golgi by the Cer transport protein (CERT), to SM. Can form a heteromeric complex with glucosylceramide synthase (GCS) increasing SMS activity and reducing glucosylceramide synthesis, a critical mechanism that controls the metabolic fate of CER in the Golgi. Does not use free phosphorylcholine or CDP-choline as donor. Can also transfer phosphoethanolamine head group of phosphatidylethanolamine (PE) on to CER to form ceramide phosphoethanolamine (CPE). Regulates receptor-mediated signal transduction via mitogenic DAG and proapoptotic CER, as well as via SM, a structural component of membrane rafts that serve as platforms for signal transduction and protein sorting. Plays a role in secretory transport via regulation of DAG pool at the Golgi apparatus and its downstream effects on PRKD1. The chain is Phosphatidylcholine:ceramide cholinephosphotransferase 1 (Sgms1) from Rattus norvegicus (Rat).